Reading from the N-terminus, the 407-residue chain is Peptidase T (407 aa).

Zn(2+) is bound at residue His82. Asp84 is an active-site residue. Zn(2+) is bound at residue Asp143. Glu177 functions as the Proton acceptor in the catalytic mechanism. Glu178, Asp200, and His382 together coordinate Zn(2+).

This sequence belongs to the peptidase M20B family. The cofactor is Zn(2+).

The protein resides in the cytoplasm. It carries out the reaction Release of the N-terminal residue from a tripeptide.. Cleaves the N-terminal amino acid of tripeptides. This is Peptidase T from Streptococcus pyogenes serotype M3 (strain ATCC BAA-595 / MGAS315).